The primary structure comprises 101 residues: Peroxisomal biogenesis factor 39 (101 aa).

The protein resides in the peroxisome. In terms of biological role, may be a peroxin involved in the PTS2-mediated protein import pathway. In Homo sapiens (Human), this protein is Peroxisomal biogenesis factor 39.